Consider the following 346-residue polypeptide: uncharacterized protein (346 aa).

It belongs to the PhyH family.

It localises to the cytoplasm. This is an uncharacterized protein from Saccharomyces cerevisiae (strain ATCC 204508 / S288c) (Baker's yeast).